We begin with the raw amino-acid sequence, 931 residues long: Chitin synthase III (931 aa).

2 N-linked (GlcNAc...) asparagine glycosylation sites follow: N37 and N94. The disordered stretch occupies residues 93–154; it reads PNASQLPPAG…PGGVGQAGGL (62 aa). Positions 102–122 are enriched in gly residues; it reads GSGGFGDNGFGQYGQPQGFGG. An N-linked (GlcNAc...) asparagine glycan is attached at N558. The next 5 helical transmembrane spans lie at 585 to 605, 644 to 664, 677 to 697, 731 to 751, and 759 to 779; these read FFLH…WFSL, IINA…FILA, IASF…SGYL, VILI…FLYL, and SFPY…VYAF. Residue N802 is glycosylated (N-linked (GlcNAc...) asparagine). Transmembrane regions (helical) follow at residues 858–878 and 899–919; these read TGLV…ITSD and FLLY…LWFL.

The protein belongs to the chitin synthase family. Class III subfamily. Highly expressed in conidia and during appressorium formation.

The protein localises to the cell membrane. The enzyme catalyses [(1-&gt;4)-N-acetyl-beta-D-glucosaminyl](n) + UDP-N-acetyl-alpha-D-glucosamine = [(1-&gt;4)-N-acetyl-beta-D-glucosaminyl](n+1) + UDP + H(+). Functionally, polymerizes chitin, a structural polymer of the cell wall and septum, by transferring the sugar moiety of UDP-GlcNAc to the non-reducing end of the growing chitin polymer. Contributes to the production of conidia and the ability of fungal conidia to germinate. Involved in the fungal cell wall integrity and the ability of conidia to withstand biophysical pressure. Required for appressorium formation and evasion of insect cellular and/or humoral defenses, promoting the fungal dimorphic transition to the production of hyphal bodies that occurs within hosts, and ultimately to virulence. The chain is Chitin synthase III from Metarhizium acridum (strain CQMa 102).